Here is a 797-residue protein sequence, read N- to C-terminus: MAP/microtubule affinity-regulating kinase 3 (797 aa).

The disordered stretch occupies residues 1–35; the sequence is MSTRTPLPTVNERDTENHISHGDGRQEVTSRTGRS. Basic and acidic residues predominate over residues 11-28; that stretch reads NERDTENHISHGDGRQEV. Serine 42 is modified (phosphoserine). The Protein kinase domain occupies 56 to 307; the sequence is YRLLKTIGKG…LEQIMKDRWI (252 aa). ATP is bound by residues 62–70 and lysine 85; that span reads IGKGNFAKV. Aspartate 178 acts as the Proton acceptor in catalysis. Position 211 is a phosphothreonine; by LKB1 (threonine 211). The 40-residue stretch at 326 to 365 folds into the UBA domain; that stretch reads ISDQKRIDIMVGMGYSQEEIQESLSKMKYDEITATYLLLG. Phosphoserine is present on residues serine 368, serine 374, serine 376, serine 380, serine 383, serine 400, serine 419, and serine 469. Disordered regions lie at residues 372–504 and 585–701; these read DASD…GMTR and PDQR…KPRS. Residues 374–385 show a composition bias toward low complexity; sequence SDSSSSSNLSLA. Over residues 391–400 the composition is skewed to polar residues; the sequence is SDLSNSTGQS. Composition is skewed to polar residues over residues 492–504 and 585–602; these read VPSS…GMTR and PDQR…SATT. Residues serine 593 and serine 596 each carry the phosphoserine modification. Threonine 602 is modified (phosphothreonine). Threonine 617 is modified (phosphothreonine; by PKC/PRKCZ). Serine 636, serine 651, and serine 654 each carry phosphoserine. Polar residues predominate over residues 637 to 664; it reads PSLSHEATPLSQTRSRGSTNLFSKLTSK. Residues 669–678 show a composition bias toward basic and acidic residues; that stretch reads LPTEYERNGR. Serine 687 is modified (phosphoserine). Basic and acidic residues predominate over residues 689–699; that stretch reads EQKDENREAKP. Residues 748–797 form the KA1 domain; sequence DGHAESLVQWEMEVCKLPRLSLNGVRFKRISGTSIAFKNIASKIANELKL.

This sequence belongs to the protein kinase superfamily. CAMK Ser/Thr protein kinase family. SNF1 subfamily. In terms of assembly, interacts with MAPT/TAU. Interacts with DLG5 (via coiled-coil domain). Interacts with STK3/MST2 and STK4/MST1 in the presence of DLG5. Interacts with YWHAB, YWHAG, YWHAQ and YWHAZ. Interacts with PKP2 (via N-terminus). Interacts with CDC25C. Interacts with KSR1. In terms of processing, phosphorylated at Thr-211 by STK11/LKB1 in complex with STE20-related adapter-alpha (STRADA) pseudo kinase and CAB39. Phosphorylation at Thr-617 by PRKCZ/aPKC inhibits the kinase activity.

The protein localises to the cell membrane. It is found in the cell projection. The protein resides in the dendrite. Its subcellular location is the cytoplasm. It carries out the reaction L-seryl-[protein] + ATP = O-phospho-L-seryl-[protein] + ADP + H(+). It catalyses the reaction L-threonyl-[protein] + ATP = O-phospho-L-threonyl-[protein] + ADP + H(+). With respect to regulation, activated by phosphorylation on Thr-211. Inhibited by phosphorylation on Thr-617. Serine/threonine-protein kinase. Involved in the specific phosphorylation of microtubule-associated proteins for MAP2 and MAP4. Phosphorylates the microtubule-associated protein MAPT/TAU. Phosphorylates CDC25C on 'Ser-216'. Regulates localization and activity of some histone deacetylases by mediating phosphorylation of HDAC7, promoting subsequent interaction between HDAC7 and 14-3-3 and export from the nucleus. Regulates localization and activity of MITF by mediating its phosphorylation, promoting subsequent interaction between MITF and 14-3-3 and retention in the cytosol. Negatively regulates the Hippo signaling pathway and antagonizes the phosphorylation of LATS1. Cooperates with DLG5 to inhibit the kinase activity of STK3/MST2 toward LATS1. Phosphorylates PKP2 and KSR1. This is MAP/microtubule affinity-regulating kinase 3 (Mark3) from Rattus norvegicus (Rat).